The sequence spans 160 residues: Nucleotide-binding protein CPS_1098 (160 aa).

This sequence belongs to the YajQ family.

Functionally, nucleotide-binding protein. This is Nucleotide-binding protein CPS_1098 from Colwellia psychrerythraea (strain 34H / ATCC BAA-681) (Vibrio psychroerythus).